A 365-amino-acid polypeptide reads, in one-letter code: Red-sensitive opsin (365 aa).

At 1-51 (MASQLNEAIFAARRRNDDDDTTRSSVFTYTNSNNTRGPFEGPNYHIAPRWV) the chain is on the extracellular side. The N-linked (GlcNAc...) asparagine glycan is linked to Asn33. A helical transmembrane segment spans residues 52–76 (YNLTSIWMIFVVFASVFTNGLVIVA). The Cytoplasmic portion of the chain corresponds to 77-88 (TLKFKKLRHPLN). Residues 89 to 113 (WILVNMAIADLGETVIASTISVFNQ) traverse the membrane as a helical segment. Residues 114-128 (IFGYFILGHPMCVLE) lie on the Extracellular side of the membrane. Cys125 and Cys202 are joined by a disulfide. A helical transmembrane segment spans residues 129–148 (GFTVSTCGITALWSLTVIAW). At 149 to 167 (ERWFVVCKPFGNIKFDEKL) the chain is on the cytoplasmic side. The helical transmembrane segment at 168–191 (AATGIIFSWVWSAGWCAPPMFGWS) threads the bilayer. Residues 192–217 (RFWPHGLKTSCGPDVFSGSSDPGVQS) lie on the Extracellular side of the membrane. Residues 218–245 (YMLVLMITCCIIPLAIIILCYLHVWWTI) form a helical membrane-spanning segment. Over 246–267 (RQVAQQQKESESTQKAEREVSR) the chain is Cytoplasmic. Residues 268 to 291 (MVVVMIVAYIFCWGPYTFFACFAA) traverse the membrane as a helical segment. The Extracellular portion of the chain corresponds to 292-299 (FSPGYSFH). Residues 300-324 (PLAAALPAYFAKSATIYNPIIYVFM) traverse the membrane as a helical segment. The residue at position 311 (Lys311) is an N6-(retinylidene)lysine. The Cytoplasmic portion of the chain corresponds to 325–365 (NRQFRNCIYQMFGKKVDDGSEVSSTSRTEVSSVSNSSVSPA). Positions 342–365 (DGSEVSSTSRTEVSSVSNSSVSPA) are disordered. Low complexity predominate over residues 345–365 (EVSSTSRTEVSSVSNSSVSPA).

Belongs to the G-protein coupled receptor 1 family. Opsin subfamily. Post-translationally, phosphorylated on some or all of the serine and threonine residues present in the C-terminal region.

It is found in the membrane. Functionally, visual pigments are the light-absorbing molecules that mediate vision. They consist of an apoprotein, opsin, covalently linked to cis-retinal. In Xenopus laevis (African clawed frog), this protein is Red-sensitive opsin (opn1lw1).